Here is a 389-residue protein sequence, read N- to C-terminus: Chaperone protein DnaJ (389 aa).

A J domain is found at 6 to 70 (DYYEILGLSK…EKRAQYDRFG (65 aa)). Residues 131–213 (GVRKDIDIPR…CSGAGRVRSR (83 aa)) form a CR-type zinc finger. Residues Cys144, Cys147, Cys161, Cys164, Cys187, Cys190, Cys201, and Cys204 each contribute to the Zn(2+) site. 4 CXXCXGXG motif repeats span residues 144-151 (CSTCSGTG), 161-168 (CPNCGGTG), 187-194 (CSACHGRG), and 201-208 (CPTCSGAG). The tract at residues 145–167 (STCSGTGAKPGTSPKRCPNCGGT) is disordered. Residues 351-389 (LSNGKKPEAEERSRSDKQKSEKPRKSKGLFEKVKDAFES) form a disordered region. The span at 355 to 389 (KKPEAEERSRSDKQKSEKPRKSKGLFEKVKDAFES) shows a compositional bias: basic and acidic residues.

This sequence belongs to the DnaJ family. Homodimer. Zn(2+) serves as cofactor.

It is found in the cytoplasm. Functionally, participates actively in the response to hyperosmotic and heat shock by preventing the aggregation of stress-denatured proteins and by disaggregating proteins, also in an autonomous, DnaK-independent fashion. Unfolded proteins bind initially to DnaJ; upon interaction with the DnaJ-bound protein, DnaK hydrolyzes its bound ATP, resulting in the formation of a stable complex. GrpE releases ADP from DnaK; ATP binding to DnaK triggers the release of the substrate protein, thus completing the reaction cycle. Several rounds of ATP-dependent interactions between DnaJ, DnaK and GrpE are required for fully efficient folding. Also involved, together with DnaK and GrpE, in the DNA replication of plasmids through activation of initiation proteins. The polypeptide is Chaperone protein DnaJ (Methanosarcina mazei (strain ATCC BAA-159 / DSM 3647 / Goe1 / Go1 / JCM 11833 / OCM 88) (Methanosarcina frisia)).